Reading from the N-terminus, the 500-residue chain is Lysine--tRNA ligase (500 aa).

Positions 411 and 418 each coordinate Mg(2+).

The protein belongs to the class-II aminoacyl-tRNA synthetase family. In terms of assembly, homodimer. Mg(2+) serves as cofactor.

It localises to the cytoplasm. It catalyses the reaction tRNA(Lys) + L-lysine + ATP = L-lysyl-tRNA(Lys) + AMP + diphosphate. The protein is Lysine--tRNA ligase of Actinobacillus pleuropneumoniae serotype 7 (strain AP76).